The primary structure comprises 348 residues: Probable dual-specificity RNA methyltransferase RlmN (348 aa).

The active-site Proton acceptor is the Glu89. The 234-residue stretch at His95–Arg328 folds into the Radical SAM core domain. Cys102 and Cys333 form a disulfide bridge. Residues Cys109, Cys113, and Cys116 each contribute to the [4Fe-4S] cluster site. S-adenosyl-L-methionine is bound by residues Gly159–Glu160, Ser191, Ser214–His216, and Asn290. The S-methylcysteine intermediate role is filled by Cys333.

It belongs to the radical SAM superfamily. RlmN family. [4Fe-4S] cluster is required as a cofactor.

The protein resides in the cytoplasm. It carries out the reaction adenosine(2503) in 23S rRNA + 2 reduced [2Fe-2S]-[ferredoxin] + 2 S-adenosyl-L-methionine = 2-methyladenosine(2503) in 23S rRNA + 5'-deoxyadenosine + L-methionine + 2 oxidized [2Fe-2S]-[ferredoxin] + S-adenosyl-L-homocysteine. It catalyses the reaction adenosine(37) in tRNA + 2 reduced [2Fe-2S]-[ferredoxin] + 2 S-adenosyl-L-methionine = 2-methyladenosine(37) in tRNA + 5'-deoxyadenosine + L-methionine + 2 oxidized [2Fe-2S]-[ferredoxin] + S-adenosyl-L-homocysteine. Its function is as follows. Specifically methylates position 2 of adenine 2503 in 23S rRNA and position 2 of adenine 37 in tRNAs. In Dictyoglomus thermophilum (strain ATCC 35947 / DSM 3960 / H-6-12), this protein is Probable dual-specificity RNA methyltransferase RlmN.